Reading from the N-terminus, the 248-residue chain is 1-(5-phosphoribosyl)-5-[(5-phosphoribosylamino)methylideneamino] imidazole-4-carboxamide isomerase (248 aa).

Catalysis depends on D8, which acts as the Proton acceptor. D131 functions as the Proton donor in the catalytic mechanism.

This sequence belongs to the HisA/HisF family.

The protein resides in the cytoplasm. The catalysed reaction is 1-(5-phospho-beta-D-ribosyl)-5-[(5-phospho-beta-D-ribosylamino)methylideneamino]imidazole-4-carboxamide = 5-[(5-phospho-1-deoxy-D-ribulos-1-ylimino)methylamino]-1-(5-phospho-beta-D-ribosyl)imidazole-4-carboxamide. It functions in the pathway amino-acid biosynthesis; L-histidine biosynthesis; L-histidine from 5-phospho-alpha-D-ribose 1-diphosphate: step 4/9. The protein is 1-(5-phosphoribosyl)-5-[(5-phosphoribosylamino)methylideneamino] imidazole-4-carboxamide isomerase of Cupriavidus taiwanensis (strain DSM 17343 / BCRC 17206 / CCUG 44338 / CIP 107171 / LMG 19424 / R1) (Ralstonia taiwanensis (strain LMG 19424)).